The primary structure comprises 90 residues: Probable Fe(2+)-trafficking protein (90 aa).

This sequence belongs to the Fe(2+)-trafficking protein family.

Its function is as follows. Could be a mediator in iron transactions between iron acquisition and iron-requiring processes, such as synthesis and/or repair of Fe-S clusters in biosynthetic enzymes. The protein is Probable Fe(2+)-trafficking protein of Methylococcus capsulatus (strain ATCC 33009 / NCIMB 11132 / Bath).